Reading from the N-terminus, the 159-residue chain is Ribosomal RNA large subunit methyltransferase H (159 aa).

Residues L76, G108, and 127–132 (FSKMTF) contribute to the S-adenosyl-L-methionine site.

It belongs to the RNA methyltransferase RlmH family. In terms of assembly, homodimer.

It localises to the cytoplasm. It carries out the reaction pseudouridine(1915) in 23S rRNA + S-adenosyl-L-methionine = N(3)-methylpseudouridine(1915) in 23S rRNA + S-adenosyl-L-homocysteine + H(+). Specifically methylates the pseudouridine at position 1915 (m3Psi1915) in 23S rRNA. In Oceanobacillus iheyensis (strain DSM 14371 / CIP 107618 / JCM 11309 / KCTC 3954 / HTE831), this protein is Ribosomal RNA large subunit methyltransferase H.